Here is a 1050-residue protein sequence, read N- to C-terminus: Beta-galactosidase (1050 aa).

The substrate site is built by asparagine 100 and aspartate 199. Aspartate 199 serves as a coordination point for Na(+). Glutamate 422, histidine 424, and glutamate 467 together coordinate Mg(2+). Substrate is bound by residues glutamate 467 and 543 to 546 (EYAH). Catalysis depends on glutamate 467, which acts as the Proton donor. Glutamate 543 functions as the Nucleophile in the catalytic mechanism. Residue asparagine 603 participates in Mg(2+) binding. The Na(+) site is built by phenylalanine 607 and asparagine 610. Substrate-binding residues include asparagine 610 and tryptophan 1025.

Belongs to the glycosyl hydrolase 2 family. Homotetramer. The cofactor is Mg(2+). It depends on Na(+) as a cofactor.

The catalysed reaction is Hydrolysis of terminal non-reducing beta-D-galactose residues in beta-D-galactosides.. This is Beta-galactosidase from Yersinia pestis bv. Antiqua (strain Angola).